We begin with the raw amino-acid sequence, 561 residues long: Embryonal Fyn-associated substrate (561 aa).

Residues 5-68 (TSTQLARALY…PANRVKLLPA (64 aa)) enclose the SH3 domain. Disordered stretches follow at residues 68-123 (AGPA…CPPS), 171-215 (HPLT…PGPP), 240-372 (LADG…HNEY), and 390-422 (DKAQ…ALSP). A compositionally biased stretch (pro residues) spans 103 to 123 (VPPPARPCPTSGPPAGPCPPS). Y253 is modified (phosphotyrosine; by SRC). 2 short sequence motifs (SH3-binding) span residues 305–311 (RPLPALP) and 335–341 (RPLPPPP). Residues 308 to 325 (PALPVPEAPSPSPVPSPA) are compositionally biased toward pro residues. Residues 352–372 (VEGDPEGREMEDDPAGHHNEY) are compositionally biased toward basic and acidic residues. The divergent helix-loop-helix motif stretch occupies residues 438 to 488 (FYAGQCQSHYSALQAAVAALMSSTQANQPPRLFVPHSKRVVVAAHRLVFVG).

The protein belongs to the CAS family. Post-translationally, phosphorylated on multiple tyrosine residues. Phosphorylated on tyrosines by FYN and SRC. In terms of tissue distribution, the protein has been detected in lung and placenta.

Functionally, docking protein which plays a central coordinating role for tyrosine-kinase-based signaling related to cell adhesion. May serve as an activator of SRC and a downstream effector. Interacts with the SH3 domain of FYN and with CRK, SRC, and YES. The polypeptide is Embryonal Fyn-associated substrate (EFS) (Homo sapiens (Human)).